The chain runs to 197 residues: Phosphoheptose isomerase (197 aa).

An SIS domain is found at 41–197 (VVETFRRGGK…EIVERTLFEE (157 aa)). Substrate is bound at residue 56 to 58 (NGG). Positions 65 and 69 each coordinate Zn(2+). Residues E69, 98 to 99 (ND), 124 to 126 (STS), S129, and Q176 each bind substrate. Zn(2+) is bound by residues Q176 and H184.

This sequence belongs to the SIS family. GmhA subfamily. The cofactor is Zn(2+).

The protein localises to the cytoplasm. It catalyses the reaction 2 D-sedoheptulose 7-phosphate = D-glycero-alpha-D-manno-heptose 7-phosphate + D-glycero-beta-D-manno-heptose 7-phosphate. It functions in the pathway carbohydrate biosynthesis; D-glycero-D-manno-heptose 7-phosphate biosynthesis; D-glycero-alpha-D-manno-heptose 7-phosphate and D-glycero-beta-D-manno-heptose 7-phosphate from sedoheptulose 7-phosphate: step 1/1. In terms of biological role, catalyzes the isomerization of sedoheptulose 7-phosphate in D-glycero-D-manno-heptose 7-phosphate. This chain is Phosphoheptose isomerase, found in Roseiflexus sp. (strain RS-1).